Here is a 69-residue protein sequence, read N- to C-terminus: Cytochrome c oxidase subunit 8A, mitochondrial (69 aa).

A mitochondrion-targeting transit peptide spans 1-25 (MSSLTPLLLRSLTGPARRLMVPRAQ). The SIFI-degron signature appears at 2–19 (SSLTPLLLRSLTGPARRL). At 26 to 36 (VHSKPPREQLG) the chain is on the mitochondrial matrix side. The helical transmembrane segment at 37-60 (VLDITIGLTSCFVCCLLPAGWVLS) threads the bilayer. Topologically, residues 61–69 (HLESYKKRE) are mitochondrial intermembrane.

It belongs to the cytochrome c oxidase VIII family. In terms of assembly, component of the cytochrome c oxidase (complex IV, CIV), a multisubunit enzyme composed of 14 subunits. The complex is composed of a catalytic core of 3 subunits MT-CO1, MT-CO2 and MT-CO3, encoded in the mitochondrial DNA, and 11 supernumerary subunits COX4I, COX5A, COX5B, COX6A, COX6B, COX6C, COX7A, COX7B, COX7C, COX8 and NDUFA4, which are encoded in the nuclear genome. The complex exists as a monomer or a dimer and forms supercomplexes (SCs) in the inner mitochondrial membrane with NADH-ubiquinone oxidoreductase (complex I, CI) and ubiquinol-cytochrome c oxidoreductase (cytochrome b-c1 complex, complex III, CIII), resulting in different assemblies (supercomplex SCI(1)III(2)IV(1) and megacomplex MCI(2)III(2)IV(2)). In response to mitochondrial stress, the precursor protein is ubiquitinated by the SIFI complex in the cytoplasm before mitochondrial import, leading to its degradation. Within the SIFI complex, UBR4 initiates ubiquitin chain that are further elongated or branched by KCMF1.

The protein localises to the mitochondrion inner membrane. It participates in energy metabolism; oxidative phosphorylation. Functionally, component of the cytochrome c oxidase, the last enzyme in the mitochondrial electron transport chain which drives oxidative phosphorylation. The respiratory chain contains 3 multisubunit complexes succinate dehydrogenase (complex II, CII), ubiquinol-cytochrome c oxidoreductase (cytochrome b-c1 complex, complex III, CIII) and cytochrome c oxidase (complex IV, CIV), that cooperate to transfer electrons derived from NADH and succinate to molecular oxygen, creating an electrochemical gradient over the inner membrane that drives transmembrane transport and the ATP synthase. Cytochrome c oxidase is the component of the respiratory chain that catalyzes the reduction of oxygen to water. Electrons originating from reduced cytochrome c in the intermembrane space (IMS) are transferred via the dinuclear copper A center (CU(A)) of subunit 2 and heme A of subunit 1 to the active site in subunit 1, a binuclear center (BNC) formed by heme A3 and copper B (CU(B)). The BNC reduces molecular oxygen to 2 water molecules using 4 electrons from cytochrome c in the IMS and 4 protons from the mitochondrial matrix. In Rattus norvegicus (Rat), this protein is Cytochrome c oxidase subunit 8A, mitochondrial (Cox8a).